The chain runs to 411 residues: Na(+)-translocating NADH-quinone reductase subunit F (411 aa).

A helical membrane pass occupies residues 6–26; sequence AIGGVAMFTLIIMSFVAIILA. In terms of domain architecture, 2Fe-2S ferredoxin-type spans 35-129; the sequence is GDVTIHINDN…DMKIEIDPEF (95 aa). Residues cysteine 72, cysteine 78, cysteine 81, and cysteine 113 each coordinate [2Fe-2S] cluster. One can recognise an FAD-binding FR-type domain in the interval 132–273; it reads VQKWECEVIS…SGPYGEFFAK (142 aa).

Belongs to the NqrF family. In terms of assembly, composed of six subunits; NqrA, NqrB, NqrC, NqrD, NqrE and NqrF. Requires [2Fe-2S] cluster as cofactor. FAD serves as cofactor.

The protein resides in the cell inner membrane. The catalysed reaction is a ubiquinone + n Na(+)(in) + NADH + H(+) = a ubiquinol + n Na(+)(out) + NAD(+). Its function is as follows. NQR complex catalyzes the reduction of ubiquinone-1 to ubiquinol by two successive reactions, coupled with the transport of Na(+) ions from the cytoplasm to the periplasm. The first step is catalyzed by NqrF, which accepts electrons from NADH and reduces ubiquinone-1 to ubisemiquinone by a one-electron transfer pathway. This Psychrobacter arcticus (strain DSM 17307 / VKM B-2377 / 273-4) protein is Na(+)-translocating NADH-quinone reductase subunit F.